A 355-amino-acid chain; its full sequence is RNA 3'-terminal phosphate cyclase (355 aa).

ATP-binding positions include glutamine 100 and 300-304 (HLADQ). Histidine 325 (tele-AMP-histidine intermediate) is an active-site residue.

It belongs to the RNA 3'-terminal cyclase family. Type 1 subfamily.

The protein resides in the cytoplasm. It catalyses the reaction a 3'-end 3'-phospho-ribonucleotide-RNA + ATP = a 3'-end 2',3'-cyclophospho-ribonucleotide-RNA + AMP + diphosphate. Catalyzes the conversion of 3'-phosphate to a 2',3'-cyclic phosphodiester at the end of RNA. The mechanism of action of the enzyme occurs in 3 steps: (A) adenylation of the enzyme by ATP; (B) transfer of adenylate to an RNA-N3'P to produce RNA-N3'PP5'A; (C) and attack of the adjacent 2'-hydroxyl on the 3'-phosphorus in the diester linkage to produce the cyclic end product. The biological role of this enzyme is unknown but it is likely to function in some aspects of cellular RNA processing. This is RNA 3'-terminal phosphate cyclase from Methanosarcina acetivorans (strain ATCC 35395 / DSM 2834 / JCM 12185 / C2A).